We begin with the raw amino-acid sequence, 69 residues long: uncharacterized protein (69 aa).

A disordered region spans residues 48–69 (EADDVKPRKGRKPKAVSDADKD).

This is an uncharacterized protein from Salmonella phage P22 (Bacteriophage P22).